The chain runs to 278 residues: Tryptophan synthase alpha chain (278 aa).

Catalysis depends on proton acceptor residues Glu49 and Asp60.

This sequence belongs to the TrpA family. Tetramer of two alpha and two beta chains.

It catalyses the reaction (1S,2R)-1-C-(indol-3-yl)glycerol 3-phosphate + L-serine = D-glyceraldehyde 3-phosphate + L-tryptophan + H2O. Its pathway is amino-acid biosynthesis; L-tryptophan biosynthesis; L-tryptophan from chorismate: step 5/5. Its function is as follows. The alpha subunit is responsible for the aldol cleavage of indoleglycerol phosphate to indole and glyceraldehyde 3-phosphate. This chain is Tryptophan synthase alpha chain, found in Corynebacterium diphtheriae (strain ATCC 700971 / NCTC 13129 / Biotype gravis).